Consider the following 181-residue polypeptide: TATA-box-binding protein (181 aa).

2 consecutive repeat copies span residues 7–83 (IVNV…IKEL) and 98–173 (VQNM…SATL).

This sequence belongs to the TBP family.

In terms of biological role, general factor that plays a role in the activation of archaeal genes transcribed by RNA polymerase. Binds specifically to the TATA box promoter element which lies close to the position of transcription initiation. The sequence is that of TATA-box-binding protein from Methanococcus vannielii (strain ATCC 35089 / DSM 1224 / JCM 13029 / OCM 148 / SB).